Reading from the N-terminus, the 456-residue chain is Chordin-like protein 1 (456 aa).

Residues 1-27 (MRKKWKMGGMKYIFSLLFFLLLEGGKT) form the signal peptide. VWFC domains follow at residues 35-100 (TYCM…PRCP) and 113-179 (KSCE…RVCR). A glycan (N-linked (GlcNAc...) asparagine) is linked at Asn118. Residues 179 to 181 (RGD) carry the Cell attachment site motif. A disordered region spans residues 202 to 223 (ARHSYHRSHYDPPPSRQAGGLS). One can recognise a VWFC 3 domain in the interval 258 to 323 (QVCVSNGKTY…IDGKCCKVCP (66 aa)). A glycan (N-linked (GlcNAc...) asparagine) is linked at Asn291.

Expressed in the developing cornea and in the eye anterior segment in addition to the retina. Differentially expressed in the fetal brain. There is high expression in cerebellum and neocortex. Expressed in retinal pericytes.

It localises to the secreted. In terms of biological role, antagonizes the function of BMP4 by binding to it and preventing its interaction with receptors. Alters the fate commitment of neural stem cells from gliogenesis to neurogenesis. Contributes to neuronal differentiation of neural stem cells in the brain by preventing the adoption of a glial fate. May play a crucial role in dorsoventral axis formation. May play a role in embryonic bone formation. May also play an important role in regulating retinal angiogenesis through modulation of BMP4 actions in endothelial cells. Plays a role during anterior segment eye development. This Homo sapiens (Human) protein is Chordin-like protein 1 (CHRDL1).